The chain runs to 443 residues: KH domain-containing, RNA-binding, signal transduction-associated protein 1 (443 aa).

A disordered region spans residues 1 to 94 (MQRRDDPASR…PLLPPSATAA (94 aa)). Phosphoserine is present on residues Ser-18 and Ser-20. N6-acetyllysine is present on Lys-21. At Ser-29 the chain carries Phosphoserine. Thr-33 is subject to Phosphothreonine. Asymmetric dimethylarginine; by PRMT1 is present on residues Arg-45 and Arg-52. At Ser-58 the chain carries Phosphoserine; by MAPK1. Over residues 61–72 (TQPPPLLPPSTP) the composition is skewed to pro residues. A phosphothreonine; by MAPK1 mark is found at Thr-71 and Thr-84. Residues 81–94 (SAPTPLLPPSATAA) are compositionally biased toward low complexity. Residues Lys-96 and Lys-102 each participate in a glycyl lysine isopeptide (Lys-Gly) (interchain with G-Cter in SUMO2) cross-link. An involved in homodimerization region spans residues 100–260 (ENKYLPELMA…VKKFLVPDMM (161 aa)). Ser-113 bears the Phosphoserine mark. Lys-139 is covalently cross-linked (Glycyl lysine isopeptide (Lys-Gly) (interchain with G-Cter in SUMO2)). Ser-150 is subject to Phosphoserine. The KH domain occupies 171 to 197 (NFVGKILGPQGNTIKRLQEETGAKISV). Position 175 is an N6-acetyllysine; alternate (Lys-175). Lys-175 participates in a covalent cross-link: Glycyl lysine isopeptide (Lys-Gly) (interchain with G-Cter in SUMO2); alternate. Thr-183 bears the Phosphothreonine mark. The interval 280–317 (PSRGRGVSVRGRGAAPPPPPVPRGRGVGPPRGALVRGT) is disordered. Residues Arg-282, Arg-284, and Arg-291 each carry the omega-N-methylarginine modification. Over residues 283-293 (GRGVSVRGRGA) the composition is skewed to low complexity. Arg-304 bears the Asymmetric dimethylarginine mark. Over residues 307-316 (GPPRGALVRG) the composition is skewed to low complexity. 2 positions are modified to omega-N-methylarginine; by PRMT1: Arg-310 and Arg-315. Position 320 is a dimethylated arginine; alternate (Arg-320). An Omega-N-methylarginine; by PRMT1; alternate modification is found at Arg-320. Arg-325 carries the post-translational modification Omega-N-methylarginine; by PRMT1. Residues 326–345 (GATVTRGVPPPPTVRGAPTP) are disordered. A dimethylated arginine; alternate mark is found at Arg-331 and Arg-340. Omega-N-methylarginine; by PRMT1; alternate is present on residues Arg-331 and Arg-340. An Asymmetric dimethylarginine; alternate modification is found at Arg-331. Positions 351–443 (GIQRIPLPPT…AYREHPYGRY (93 aa)) are interaction with HNRNPA1. Residue Tyr-387 is modified to Phosphotyrosine. Ser-390 carries the post-translational modification Phosphoserine. The interval 400 to 420 (GHGELQDSYEAYGQDDWNGTR) is interaction with ZBTB7A. The interval 411–443 (YGQDDWNGTRPSLKAPPARPVKGAYREHPYGRY) is disordered. Lys-432 participates in a covalent cross-link: Glycyl lysine isopeptide (Lys-Gly) (interchain with G-Cter in SUMO2). Residues 434 to 443 (AYREHPYGRY) show a composition bias toward basic and acidic residues. Tyr-435, Tyr-440, and Tyr-443 each carry phosphotyrosine; by PTK6.

Belongs to the KHDRBS family. As to quaternary structure, self-associates to form homooligomers when bound to RNA, oligomerization appears to be limited when binding to proteins. Forms a trimeric complex in the nucleus consisting of BANP, HDAC6 and KHDRBS1/SAM68; HDAC6 keeps KHDRBS1 in a deacetylated state which inhibits the inclusion of CD44 alternate exons. The complex is disrupted by MAPK1/MAPK3-mediated phosphorylation of BANP which results in BANP export to the cytoplasm. This facilitates acetylation of KHDRBS1 and CD44 variant exon inclusion. Interacts with KHDRBS3/SLIM-2 and KHDRBS2/SLIM-1; heterooligomer formation of KHDRBS family proteins may modulate RNA substrate specificity. Interacts with RASA1, FYN, GRB2, PLCG1, SRC, CBP and PRMT1. Interacts with PTK6 (via SH3 and SH2 domains). Forms a complex with ILF2, ILF3, YLPM1, RBMX, NCOA5 and PPP1CA. Binds WBP4/FBP21 (via WW domains), FNBP4/FBP30 (via WW domains). Interacts (via Arg/Gly-rich-flanked Pro-rich regions) with FYN (via the SH3 domain). Interacts with APC, HNRNPA1. Interacts with the non-receptor tyrosine kinase SRMS; the interaction leads to phosphorylation of KHDRBS1. Interacts with ZBTB7A; negatively regulates KHDRBS1 splicing activity toward BCL2L1. Tyrosine phosphorylated by several non-receptor tyrosine kinases including LCK, FYN and JAK3. Also tyrosine phosphorylated by the non-receptor tyrosine kinase SRMS in an EGF-dependent manner. Phosphorylation by PTK6 negatively regulates its RNA binding ability. Phosphorylation by PTK6 at Tyr-440 dictates the nuclear localization of KHDRBS1. Phosphorylation by MAPK1 at Ser-58, Thr-71 and Thr-84 regulates CD44 alternative splicing by promoting CD44 exon v5 inclusion. Post-translationally, acetylated. Positively correlates with ability to bind RNA. Deacetylated by HDAC6; this regulates alternative splicing by inhibiting the inclusion of CD44 alternate exons. In terms of processing, arginine methylation is required for nuclear localization. Inhibits interaction with Src-like SH3 domains, but not interaction with WW domains of WBP4/FBP21 and FNBP4/FBP30. In adult cerebellum expressed in most neuronal cell populations, specifically in cerebellar granule cells of the internal granular layer, ROR(alpha)-positive Purkinje cells, internal granular layer and molecular layer interneurons (at protein level).

It localises to the nucleus. It is found in the cytoplasm. The protein resides in the membrane. In terms of biological role, recruited and tyrosine phosphorylated by several receptor systems, for example the T-cell, leptin and insulin receptors. Once phosphorylated, functions as an adapter protein in signal transduction cascades by binding to SH2 and SH3 domain-containing proteins. Role in G2-M progression in the cell cycle. Represses CBP-dependent transcriptional activation apparently by competing with other nuclear factors for binding to CBP. Also acts as a putative regulator of mRNA stability and/or translation rates and mediates mRNA nuclear export. Positively regulates the association of constitutive transport element (CTE)-containing mRNA with large polyribosomes and translation initiation. May not be involved in the nucleocytoplasmic export of unspliced (CTE)-containing RNA species. RNA-binding protein that plays a role in the regulation of alternative splicing and influences mRNA splice site selection and exon inclusion. Binds to RNA containing 5'-[AU]UAA-3' as a bipartite motif spaced by more than 15 nucleotides. Binds poly(A). In cooperation with HNRNPA1 modulates alternative splicing of BCL2L1 by promoting splicing toward isoform Bcl-X(S), and of SMN1. Can regulate CD44 alternative splicing in a Ras pathway-dependent manner. Can regulate alternative splicing of NRXN1 and NRXN3 in the laminin G-like domain 6 containing the evolutionary conserved neurexin alternative spliced segment 4 (AS4) involved in neurexin selective targeting to postsynaptic partners. In a neuronal activity-dependent manner cooperates synergistically with KHDRBS2/SLIM-1 in regulation of NRXN1 exon skipping at AS4. The cooperation with KHDRBS2/SLIM-1 is antagonistic for regulation of NXRN3 alternative splicing at AS4. The sequence is that of KH domain-containing, RNA-binding, signal transduction-associated protein 1 from Mus musculus (Mouse).